A 428-amino-acid chain; its full sequence is Putative zinc metalloprotease SAS1196 (428 aa).

His-21 provides a ligand contact to Zn(2+). The active site involves Glu-22. His-25 contributes to the Zn(2+) binding site. Helical transmembrane passes span 172–194, 309–331, 352–374, and 401–420; these read FLTL…IGLA, GSTL…GFSF, IISL…LIPI, and TTII…LVTW. In terms of domain architecture, PDZ spans 186–269; it reads ALVLFIGLAY…TKSVELTPKK (84 aa).

This sequence belongs to the peptidase M50B family. It depends on Zn(2+) as a cofactor.

The protein localises to the cell membrane. This chain is Putative zinc metalloprotease SAS1196, found in Staphylococcus aureus (strain MSSA476).